We begin with the raw amino-acid sequence, 113 residues long: Ig heavy chain V-III region T957 (113 aa).

An Ig-like domain is found at 1–113 (EVKLEESGGG…YWGQGTLVTV (113 aa)). An intrachain disulfide couples Cys-22 to Cys-98.

The sequence is that of Ig heavy chain V-III region T957 from Mus musculus (Mouse).